The primary structure comprises 110 residues: Spermatid nuclear transition protein 3 (110 aa).

Residues 80-110 (RSCAREKLNQSRKRYQNMRQSQRRGQNQKRR) form a disordered region.

It is found in the nucleus. The protein resides in the chromosome. Its function is as follows. Involved in nuclear basic protein transition: histones are replaced by spermatid specific proteins which are themselves replaced by protamines in late spermatids. This is Spermatid nuclear transition protein 3 from Ovis aries (Sheep).